Consider the following 329-residue polypeptide: PTS-dependent dihydroxyacetone kinase 1, dihydroxyacetone-binding subunit DhaK (329 aa).

Residues 7 to 329 (GTDQVVEQMV…LKLPVDTIAW (323 aa)) form the DhaK domain. Dihydroxyacetone contacts are provided by residues 53–56 (GSGH), Lys-104, and Asp-109. Catalysis depends on His-56, which acts as the Proton acceptor. His-218 (tele-hemiaminal-histidine intermediate) is an active-site residue.

In terms of assembly, homodimer. The dihydroxyacetone kinase complex is composed of a homodimer of DhaM, a homodimer of DhaK and the subunit DhaL.

It localises to the cytoplasm. It carries out the reaction dihydroxyacetone + phosphoenolpyruvate = dihydroxyacetone phosphate + pyruvate. It participates in polyol metabolism; glycerol degradation. Its function is as follows. Dihydroxyacetone binding subunit of the dihydroxyacetone kinase, which is responsible for the phosphoenolpyruvate (PEP)-dependent phosphorylation of dihydroxyacetone via a phosphoryl group transfer from DhaL-ATP. The protein is PTS-dependent dihydroxyacetone kinase 1, dihydroxyacetone-binding subunit DhaK of Listeria innocua serovar 6a (strain ATCC BAA-680 / CLIP 11262).